The following is a 248-amino-acid chain: Probable transcriptional regulatory protein RL3983 (248 aa).

The protein belongs to the TACO1 family.

It is found in the cytoplasm. This chain is Probable transcriptional regulatory protein RL3983, found in Rhizobium johnstonii (strain DSM 114642 / LMG 32736 / 3841) (Rhizobium leguminosarum bv. viciae).